The sequence spans 200 residues: Putative 3-methyladenine DNA glycosylase (200 aa).

Belongs to the DNA glycosylase MPG family.

This Bradyrhizobium diazoefficiens (strain JCM 10833 / BCRC 13528 / IAM 13628 / NBRC 14792 / USDA 110) protein is Putative 3-methyladenine DNA glycosylase.